We begin with the raw amino-acid sequence, 252 residues long: Zinc import ATP-binding protein ZnuC (252 aa).

One can recognise an ABC transporter domain in the interval 5 to 220 (VTLNKISVTF…PEFIAMFGQR (216 aa)). 37 to 44 (GPNGAGKS) provides a ligand contact to ATP.

This sequence belongs to the ABC transporter superfamily. Zinc importer (TC 3.A.1.15.5) family. The complex is composed of two ATP-binding proteins (ZnuC), two transmembrane proteins (ZnuB) and a solute-binding protein (ZnuA).

Its subcellular location is the cell inner membrane. The enzyme catalyses Zn(2+)(out) + ATP(in) + H2O(in) = Zn(2+)(in) + ADP(in) + phosphate(in) + H(+)(in). Its function is as follows. Part of the ABC transporter complex ZnuABC involved in zinc import. Responsible for energy coupling to the transport system. This Yersinia enterocolitica serotype O:8 / biotype 1B (strain NCTC 13174 / 8081) protein is Zinc import ATP-binding protein ZnuC.